A 171-amino-acid chain; its full sequence is Shikimate kinase (171 aa).

14 to 19 (GAGKST) contributes to the ATP binding site. Mg(2+) is bound at residue serine 18. Substrate contacts are provided by aspartate 36, arginine 60, and glycine 82. Arginine 120 serves as a coordination point for ATP. Arginine 139 is a substrate binding site. Glutamine 156 contributes to the ATP binding site.

Belongs to the shikimate kinase family. Monomer. Mg(2+) is required as a cofactor.

The protein localises to the cytoplasm. It carries out the reaction shikimate + ATP = 3-phosphoshikimate + ADP + H(+). The protein operates within metabolic intermediate biosynthesis; chorismate biosynthesis; chorismate from D-erythrose 4-phosphate and phosphoenolpyruvate: step 5/7. Functionally, catalyzes the specific phosphorylation of the 3-hydroxyl group of shikimic acid using ATP as a cosubstrate. In Alteromonas mediterranea (strain DSM 17117 / CIP 110805 / LMG 28347 / Deep ecotype), this protein is Shikimate kinase.